A 460-amino-acid chain; its full sequence is Lipase member I (460 aa).

A signal peptide spans 1-15 (MRVYIFLCLMCWVRS). A glycan (N-linked (GlcNAc...) asparagine) is linked at Asn63. The Nucleophile role is filled by Ser159. Asp183 (charge relay system) is an active-site residue. Cys238 and Cys251 are joined by a disulfide. Residue His253 is the Charge relay system of the active site. 2 disulfide bridges follow: Cys275-Cys286 and Cys289-Cys297. Asn396 carries an N-linked (GlcNAc...) asparagine glycan. An intrachain disulfide couples Cys436 to Cys455.

Belongs to the AB hydrolase superfamily. Lipase family. In terms of assembly, interacts with heparin with a high affinity. Expressed in testis. Expressed exclusively at the connecting piece of the sperm.

It is found in the cell membrane. The protein resides in the secreted. The catalysed reaction is 1-hexadecanoyl-2-(9Z-octadecenoyl)-sn-glycero-3-phosphate + H2O = 2-(9Z-octadecenoyl)-sn-glycero-3-phosphate + hexadecanoate + H(+). With respect to regulation, inhibited by sodium vanadate. Hydrolyzes specifically phosphatidic acid (PA) to produce 2-acyl lysophosphatidic acid (LPA; a potent bioactive lipid mediator) and fatty acid. Does not hydrolyze other phospholipids, like phosphatidylserine (PS), phosphatidylcholine (PC) and phosphatidylethanolamine (PE) or triacylglycerol (TG). The polypeptide is Lipase member I (LIPI) (Homo sapiens (Human)).